A 1163-amino-acid polypeptide reads, in one-letter code: Ankyrin repeat-containing protein F37A4.4 (1163 aa).

The stretch at 856 to 885 is one ANK repeat; sequence YGNTALHVATRRGYQNLVEILIKHGADRSF. Positions 929-1025 constitute a BRCT domain; sequence LCVPEKFPVS…KLIEKDCDYL (97 aa).

This is Ankyrin repeat-containing protein F37A4.4 from Caenorhabditis elegans.